The chain runs to 190 residues: NAD(P)H-quinone oxidoreductase subunit I (190 aa).

4Fe-4S ferredoxin-type domains lie at glycine 55–threonine 84 and lysine 95–glutamate 124. [4Fe-4S] cluster is bound by residues cysteine 64, cysteine 67, cysteine 70, cysteine 74, cysteine 104, cysteine 107, cysteine 110, and cysteine 114. A disordered region spans residues isoleucine 169–aspartate 190.

It belongs to the complex I 23 kDa subunit family. In terms of assembly, NDH-1 is composed of at least 11 different subunits. The cofactor is [4Fe-4S] cluster.

The protein resides in the cellular thylakoid membrane. It catalyses the reaction a plastoquinone + NADH + (n+1) H(+)(in) = a plastoquinol + NAD(+) + n H(+)(out). The catalysed reaction is a plastoquinone + NADPH + (n+1) H(+)(in) = a plastoquinol + NADP(+) + n H(+)(out). Its function is as follows. NDH-1 shuttles electrons from an unknown electron donor, via FMN and iron-sulfur (Fe-S) centers, to quinones in the respiratory and/or the photosynthetic chain. The immediate electron acceptor for the enzyme in this species is believed to be plastoquinone. Couples the redox reaction to proton translocation, and thus conserves the redox energy in a proton gradient. The protein is NAD(P)H-quinone oxidoreductase subunit I of Microcystis aeruginosa (strain NIES-843 / IAM M-2473).